A 420-amino-acid polypeptide reads, in one-letter code: Uteroferrin-associated basic protein 2 (420 aa).

The first 25 residues, 1–25, serve as a signal peptide directing secretion; that stretch reads MSHGKMPLVLSLVLILCGLFNSISC. N-linked (GlcNAc...) asparagine glycosylation is found at asparagine 225, asparagine 271, and asparagine 343.

It belongs to the serpin family. UTMP subfamily.

It localises to the secreted. It is found in the extracellular space. The protein is Uteroferrin-associated basic protein 2 of Sus scrofa (Pig).